A 955-amino-acid chain; its full sequence is MSRLSGITPRARDDRSQFQNPRLEIAVPDRTAGLQRTKRTLLVKCVLDETKQTIQHVVTEKNEGTLLDAASIASSIKYHAEFSPAFSPERFELPKAYFATAQSVRDALIVNWNATYDYYEKLNMKQAYYLSMEFLQGRALLNAIGNLELTGEYAEALNKLGHNLENVASKEPDAALGNGGLGRLASCFLDSLATLNYPAWGYGLRYKYGLFKQRITKDGQEEVAEDWLELGNPWEIIRMDVSYPVKFFGKVITGSDGKKHWIGGEDILAVAYDVPIPGYKTRTTISLRLWSTKVPSEDFDLYSFNAGEHTKACEAQANAEKICYILYPGDESIEGKILRLKQQYTLCSASLQDIIARFERRSGEYVKWEEFPEKVAVQMNDTHPTLCIPELIRILIDLKGLSWKEAWNITQRTVAYTNHTVLPEALEKWSYELMEKLLPRHIEIIEMIDEQLINEIVSEYGTSDLDMLEKKLNDMRILENFDIPSSIANLFTKPKETSIVDPSEEVEVSGKVVTESVEVSDKVVTESEKDELEEKDTELEKDEDPVPAPIPPKMVRMANLCVVGGHAVNGVAEIHSDIVKEDVFNDFYQLWPEKFQNKTNGVTPRRWIRFCNPALSNIITKWIGTEDWVLNTEKLAELRKFADNEDLQIEWRAAKRSNKVKVASFLKERTGYSVSPNAMFDIQVKRIHEYKRQLLNILGIVYRYKQMKEMSAREREAKFVPRVCIFGGKAFATYVQAKRIAKFITDVGATINHDPEIGDLLKVIFVPDYNVSAAELLIPASGLSQHISTAGMEASGQSNMKFAMNGCILIGTLDGANVEIRQEVGEENFFLFGAEAHEIAGLRKERAEGKFVPDERFEEVKEFIKRGVFGSNTYDELLGSLEGNEGFGRGDYFLVGKDFPSYIECQEKVDEAYRDQKIWTRMSILNTAGSYKFSSDRTIHEYAKDIWNIQPVVFP.

A chloroplast-targeting transit peptide spans 1 to 43 (MSRLSGITPRARDDRSQFQNPRLEIAVPDRTAGLQRTKRTLLV). Positions 522–550 (KVVTESEKDELEEKDTELEKDEDPVPAPI) are disordered. Residues 528–545 (EKDELEEKDTELEKDEDP) are compositionally biased toward acidic residues. Lysine 801 bears the N6-(pyridoxal phosphate)lysine mark.

This sequence belongs to the glycogen phosphorylase family. Pyridoxal 5'-phosphate is required as a cofactor.

It is found in the plastid. The protein resides in the chloroplast. Its subcellular location is the amyloplast. The enzyme catalyses [(1-&gt;4)-alpha-D-glucosyl](n) + phosphate = [(1-&gt;4)-alpha-D-glucosyl](n-1) + alpha-D-glucose 1-phosphate. In terms of biological role, phosphorylase is an important allosteric enzyme in carbohydrate metabolism. Enzymes from different sources differ in their regulatory mechanisms and in their natural substrates. However, all known phosphorylases share catalytic and structural properties. This Ipomoea batatas (Sweet potato) protein is Alpha-1,4 glucan phosphorylase L isozyme, chloroplastic/amyloplastic.